We begin with the raw amino-acid sequence, 804 residues long: Endoplasmin (804 aa).

The first 21 residues, 1–21 (MRALWVLGLCCVLLTFGSVRA), serve as a signal peptide directing secretion. An SRT pseudosubstrate motif motif is present at residues 42-44 (SRT). The N-linked (GlcNAc...) asparagine glycan is linked to Asn62. The residue at position 64 (Ser64) is a Phosphoserine. Asn107 carries an N-linked (GlcNAc...) asparagine glycan. ATP-binding residues include Asn107, Asp149, and Asn162. Lys168 is modified (N6-(2-hydroxyisobutyryl)lysine). Ser172 bears the Phosphoserine mark. ATP is bound at residue Phe199. A glycan (N-linked (GlcNAc...) asparagine) is linked at Asn217. Positions 288 to 323 (TVEEPMEEEEAAKEEKEESDDEAAVEEEEEEKKPKT) are disordered. Residues 289–317 (VEEPMEEEEAAKEEKEESDDEAAVEEEEE) show a composition bias toward acidic residues. A phosphoserine mark is found at Ser306 and Ser403. Position 404 is an N6-succinyllysine (Lys404). Asn445 carries an N-linked (GlcNAc...) asparagine glycan. Ser447 bears the Phosphoserine mark. Position 479 is an N6-acetyllysine (Lys479). 2 N-linked (GlcNAc...) asparagine glycosylation sites follow: Asn481 and Asn502. Lys633 carries the N6-succinyllysine modification. Positions 750 to 804 (DPDAKVEEEPEEEPEETTEDTTEDTEQDEDEEMDVGTDEEEQETAKESTAEKDEL) are disordered. Positions 757–791 (EEPEEEPEETTEDTTEDTEQDEDEEMDVGTDEEEQ) are enriched in acidic residues. Phosphothreonine is present on Thr786. A compositionally biased stretch (basic and acidic residues) spans 792 to 804 (ETAKESTAEKDEL). The Prevents secretion from ER motif lies at 801–804 (KDEL).

Belongs to the heat shock protein 90 family. As to quaternary structure, homodimer; disulfide-linked. Component of an EIF2 complex at least composed of CELF1/CUGBP1, CALR, CALR3, EIF2S1, EIF2S2, HSP90B1 and HSPA5. Part of a large chaperone multiprotein complex comprising DNAJB11, HSP90B1, HSPA5, HYOU, PDIA2, PDIA4, PDIA6, PPIB, SDF2L1, UGGT1 and very small amounts of ERP29, but not, or at very low levels, CALR nor CANX. Interacts with AIMP1; regulates its retention in the endoplasmic reticulum. Hyperglycosylated form interacts with OS9; promoting its degradation by the endoplasmic reticulum associated degradation (ERAD). Interacts with CNPY3. This interaction is disrupted in the presence of ATP. Interacts with TLR4 and TLR9, but not with TLR3. Interacts with MZB1 in a calcium-dependent manner. Interacts with METTL23. Interacts with IL1B; the interaction facilitates cargo translocation into the ERGIC. Interacts with EIF2AK3. In terms of processing, phosphorylated by CK2. Post-translationally, N-glycosylated cotranslationally at Asn-217 by STT3A-containing OST-A complex: this glycosylation is constitutive. In response to various stress, 5 additional facultative sites (Asn-62, Asn-107, Asn-445, Asn-481 and Asn-502) can be glycosylated post-translationally by STT3B-containing OST-B complex, leading to a hyperglycosylated form that is degraded by the ER-associated degradation (ERAD) pathway. In normal conditions, the OST-A complex together with CCDC134 prevent glycosylation at facultative sites during protein folding, thereby preventing hyperglycosylation. Mechanistically, nascent HSP90B1 is tethered during translation to a specialized CCDC134-containing translocon that forms a microenvironment for its folding, in which STT3A associates with the SRT pseudosubstrate motif, and prevents access to facultative glycosylation sites until folding is completed, rendering its facultative sites inaccessible to the OST-B complex.

Its subcellular location is the endoplasmic reticulum lumen. It localises to the sarcoplasmic reticulum lumen. The protein localises to the melanosome. The enzyme catalyses ATP + H2O = ADP + phosphate + H(+). Functionally, ATP-dependent chaperone involved in the processing of proteins in the endoplasmic reticulum, regulating their transport. Together with MESD, acts as a modulator of the Wnt pathway by promoting the folding of LRP6, a coreceptor of the canonical Wnt pathway. When associated with CNPY3, required for proper folding of Toll-like receptors. Promotes folding and trafficking of TLR4 to the cell surface. May participate in the unfolding of cytosolic leaderless cargos (lacking the secretion signal sequence) such as the interleukin 1/IL-1 to facilitate their translocation into the ERGIC (endoplasmic reticulum-Golgi intermediate compartment) and secretion; the translocation process is mediated by the cargo receptor TMED10. The sequence is that of Endoplasmin (HSP90B1) from Pongo abelii (Sumatran orangutan).